A 739-amino-acid chain; its full sequence is Polyribonucleotide nucleotidyltransferase (739 aa).

Mg(2+)-binding residues include aspartate 488 and aspartate 494. The 60-residue stretch at 555 to 614 folds into the KH domain; it reads PKIVTLKINPDKIRDVIGPGGKVINGIIDETGVKIDIDQDGTVFIASTDQDGINHARQLI. An S1 motif domain is found at 624–692; the sequence is GEEFDGTVRR…DKGRVNASHK (69 aa). Residues 698-739 form a disordered region; that stretch reads GMSPEDRAAYDEKKKTERDSRPPRRDTGSRPPRDGQRPPRRN. The span at 701–739 shows a compositional bias: basic and acidic residues; sequence PEDRAAYDEKKKTERDSRPPRRDTGSRPPRDGQRPPRRN.

It belongs to the polyribonucleotide nucleotidyltransferase family. Requires Mg(2+) as cofactor.

It localises to the cytoplasm. The catalysed reaction is RNA(n+1) + phosphate = RNA(n) + a ribonucleoside 5'-diphosphate. In terms of biological role, involved in mRNA degradation. Catalyzes the phosphorolysis of single-stranded polyribonucleotides processively in the 3'- to 5'-direction. This is Polyribonucleotide nucleotidyltransferase from Exiguobacterium sibiricum (strain DSM 17290 / CCUG 55495 / CIP 109462 / JCM 13490 / 255-15).